Consider the following 309-residue polypeptide: HPr kinase/phosphorylase (309 aa).

Residues His138 and Lys159 contribute to the active site. 153–160 (GQSGVGKS) contacts ATP. Residue Ser160 participates in Mg(2+) binding. Asp177 (proton acceptor; for phosphorylation activity. Proton donor; for dephosphorylation activity) is an active-site residue. The segment at 201–210 (LEIRGLGIIN) is important for the catalytic mechanism of both phosphorylation and dephosphorylation. Glu202 lines the Mg(2+) pocket. Arg243 is an active-site residue. The tract at residues 264-269 (PVRPGR) is important for the catalytic mechanism of dephosphorylation.

This sequence belongs to the HPrK/P family. As to quaternary structure, homohexamer. The cofactor is Mg(2+).

It carries out the reaction [HPr protein]-L-serine + ATP = [HPr protein]-O-phospho-L-serine + ADP + H(+). The catalysed reaction is [HPr protein]-O-phospho-L-serine + phosphate + H(+) = [HPr protein]-L-serine + diphosphate. In terms of biological role, catalyzes the ATP- as well as the pyrophosphate-dependent phosphorylation of a specific serine residue in HPr, a phosphocarrier protein of the phosphoenolpyruvate-dependent sugar phosphotransferase system (PTS). HprK/P also catalyzes the pyrophosphate-producing, inorganic phosphate-dependent dephosphorylation (phosphorolysis) of seryl-phosphorylated HPr (P-Ser-HPr). The two antagonistic activities of HprK/P are regulated by several intracellular metabolites, which change their concentration in response to the absence or presence of rapidly metabolisable carbon sources (glucose, fructose, etc.) in the growth medium. Also phosphorylates/dephosphorylates the HPr-like catabolite repression protein crh on a specific serine residue. Therefore, by controlling the phosphorylation state of HPr and crh, HPrK/P is a sensor enzyme that plays a major role in the regulation of carbon metabolism and sugar transport: it mediates carbon catabolite repression (CCR), and regulates PTS-catalyzed carbohydrate uptake and inducer exclusion. The polypeptide is HPr kinase/phosphorylase (Bacillus anthracis (strain A0248)).